A 391-amino-acid chain; its full sequence is uncharacterized protein (391 aa).

2 WD repeats span residues 137-179 (VNDI…PILA) and 182-222 (PLSS…SAEE).

It localises to the cytoplasm. Its subcellular location is the nucleus. This is an uncharacterized protein from Schizosaccharomyces pombe (strain 972 / ATCC 24843) (Fission yeast).